Consider the following 358-residue polypeptide: Gibberellin 3-beta-dioxygenase 1 (358 aa).

The region spanning 204-308 (DLNWAQAALQ…RLSVAFLWGP (105 aa)) is the Fe2OG dioxygenase domain. Fe cation is bound by residues His232, Asp234, and His289. Arg299 is an active-site residue.

This sequence belongs to the iron/ascorbate-dependent oxidoreductase family. GA3OX subfamily. Requires L-ascorbate as cofactor. The cofactor is Fe cation. As to expression, expressed in stems, roots, leaves, flowers, and siliques. Highly expressed near the nodes in stems and in the stamen filaments of flowers. Detected in developing cotyledons, vegetative shoot apical meristem and non-meristematic, non-elongation regions of the roots. Found in the cortex and the endodermis of the embryo axis in germinating seeds and in the placenta in developing siliques.

It carries out the reaction gibberellin A9 + 2-oxoglutarate + O2 = gibberellin A4 + succinate + CO2. The catalysed reaction is gibberellin A20 + 2-oxoglutarate + O2 = gibberellin A1 + succinate + CO2. Its pathway is plant hormone biosynthesis; gibberellin biosynthesis. In terms of biological role, converts the inactive gibberellin (GA) precursors GA9 and GA20 into the bioactives gibberellins GA4 and GA1, respectively. Involved in the production of bioactive GA for vegetative growth and development. The protein is Gibberellin 3-beta-dioxygenase 1 (GA3OX1) of Arabidopsis thaliana (Mouse-ear cress).